Consider the following 77-residue polypeptide: ATP synthase subunit 9, mitochondrial (77 aa).

2 helical membrane passes run 8–28 and 45–72; these read MGAG…GNVL and LFGY…LISF.

This sequence belongs to the ATPase C chain family. In terms of assembly, F-type ATPases have 2 components, CF(1) - the catalytic core - and CF(0) - the membrane proton channel. CF(1) has five subunits: alpha(3), beta(3), gamma(1), delta(1), epsilon(1). CF(0) has three main subunits: a, b and c.

The protein localises to the mitochondrion membrane. Its function is as follows. This protein is one of the chains of the nonenzymatic membrane component (F0) of mitochondrial ATPase. The chain is ATP synthase subunit 9, mitochondrial (ATP9) from Petunia sp. (Petunia).